The primary structure comprises 167 residues: uncharacterized protein (167 aa).

The chain crosses the membrane as a helical span at residues 39–59 (LSLFSLSPLFLLLSISSLIFS). Positions 92–122 (LGTQIEMITQAMTTLESRVTDLQQESNDHRT) form a coiled coil. The disordered stretch occupies residues 134–167 (RDLGDENRPKPTTNKMIATGEQHKGEVSTSLFHD). Residues 154-167 (EQHKGEVSTSLFHD) show a composition bias toward basic and acidic residues.

The protein resides in the mitochondrion membrane. This is an uncharacterized protein from Arabidopsis thaliana (Mouse-ear cress).